The chain runs to 562 residues: Serine/threonine-protein kinase dst3 (562 aa).

The Protein kinase domain occupies F23–I285. ATP is bound by residues V29–V37 and K59. Residue D154 is the Proton acceptor of the active site. 2 disordered regions span residues L316–S339 and S366–I562. The segment covering Q322–S339 has biased composition (polar residues). Composition is skewed to low complexity over residues N421–T431, Q442–K454, and T476–T494. Over residues G495 to S522 the composition is skewed to polar residues. Positions E542–I562 are enriched in acidic residues.

This sequence belongs to the protein kinase superfamily. STE Ser/Thr protein kinase family. STE20 subfamily. It depends on Mg(2+) as a cofactor.

The catalysed reaction is L-seryl-[protein] + ATP = O-phospho-L-seryl-[protein] + ADP + H(+). The enzyme catalyses L-threonyl-[protein] + ATP = O-phospho-L-threonyl-[protein] + ADP + H(+). The sequence is that of Serine/threonine-protein kinase dst3 from Dictyostelium discoideum (Social amoeba).